The following is a 229-amino-acid chain: Histidine biosynthesis bifunctional protein HisIE (229 aa).

The phosphoribosyl-AMP cyclohydrolase stretch occupies residues 1–127; that stretch reads MNTLLDGIDW…APDTSALYGV (127 aa). Positions 128–229 are phosphoribosyl-ATP pyrophosphohydrolase; it reads VDRLYHELLA…IAEKNSRKDS (102 aa).

It in the N-terminal section; belongs to the PRA-CH family. This sequence in the C-terminal section; belongs to the PRA-PH family.

The protein resides in the cytoplasm. The enzyme catalyses 1-(5-phospho-beta-D-ribosyl)-ATP + H2O = 1-(5-phospho-beta-D-ribosyl)-5'-AMP + diphosphate + H(+). The catalysed reaction is 1-(5-phospho-beta-D-ribosyl)-5'-AMP + H2O = 1-(5-phospho-beta-D-ribosyl)-5-[(5-phospho-beta-D-ribosylamino)methylideneamino]imidazole-4-carboxamide. The protein operates within amino-acid biosynthesis; L-histidine biosynthesis; L-histidine from 5-phospho-alpha-D-ribose 1-diphosphate: step 2/9. Its pathway is amino-acid biosynthesis; L-histidine biosynthesis; L-histidine from 5-phospho-alpha-D-ribose 1-diphosphate: step 3/9. The sequence is that of Histidine biosynthesis bifunctional protein HisIE from Wolinella succinogenes (strain ATCC 29543 / DSM 1740 / CCUG 13145 / JCM 31913 / LMG 7466 / NCTC 11488 / FDC 602W) (Vibrio succinogenes).